Consider the following 227-residue polypeptide: Lipoprotein-releasing system ATP-binding protein LolD (227 aa).

One can recognise an ABC transporter domain in the interval leucine 6 to glutamate 227. Glycine 42 to serine 49 provides a ligand contact to ATP.

Belongs to the ABC transporter superfamily. Lipoprotein translocase (TC 3.A.1.125) family. In terms of assembly, the complex is composed of two ATP-binding proteins (LolD) and two transmembrane proteins (LolC and LolE).

Its subcellular location is the cell inner membrane. In terms of biological role, part of the ABC transporter complex LolCDE involved in the translocation of mature outer membrane-directed lipoproteins, from the inner membrane to the periplasmic chaperone, LolA. Responsible for the formation of the LolA-lipoprotein complex in an ATP-dependent manner. This is Lipoprotein-releasing system ATP-binding protein LolD from Legionella pneumophila (strain Paris).